The primary structure comprises 597 residues: Protein unc-93 homolog B1 (597 aa).

A disordered region spans residues 1–29 (MEAEPPLYPMAGAAGPQGDEDLLGVPDGP). The next 5 helical transmembrane spans lie at 64-84 (VLAA…LLQM), 110-130 (KMLM…PVLI), 132-152 (FFGT…FVST), 160-180 (TLVP…ASMG), and 223-243 (IFYS…IYFL). N251 and N272 each carry an N-linked (GlcNAc...) asparagine glycan. Transmembrane regions (helical) follow at residues 285 to 305 (LIVV…LVLG), 343 to 363 (LVPF…GIAL), 378 to 398 (LLVA…LGLW), 403 to 423 (VPLV…FFWA), and 428 to 448 (VLQH…GSAL). N449 carries an N-linked (GlcNAc...) asparagine glycan. Transmembrane regions (helical) follow at residues 469–489 (FIFT…YLGS) and 491–511 (LHMK…AVSY). Positions 522–597 (VAPRQPRIPR…AQGGDGPEEQ (76 aa)) are disordered. 2 positions are modified to phosphoserine: S547 and S550.

The protein belongs to the unc-93 family. In terms of assembly, interacts with TLR3, TLR5, TLR7, and TLR9 (probably via transmembrane domain). Post-translationally, N-glycosylated. In terms of tissue distribution, expressed in plasmocytoid dendritic cells (at protein level). Highly expressed in antigen-presenting cells. Expressed in heart, and at lower level in kidney. Expressed at low level in other tissues.

The protein resides in the endoplasmic reticulum membrane. It is found in the endosome. The protein localises to the lysosome. Its subcellular location is the cytoplasmic vesicle. It localises to the phagosome. In terms of biological role, plays an important role in innate and adaptive immunity by regulating nucleotide-sensing Toll-like receptor (TLR) signaling. Required for the transport of a subset of TLRs (including TLR3, TLR7 and TLR9) from the endoplasmic reticulum to endolysosomes where they can engage pathogen nucleotides and activate signaling cascades. May play a role in autoreactive B-cells removal. This is Protein unc-93 homolog B1 from Homo sapiens (Human).